The sequence spans 289 residues: Rhodopsin (289 aa).

Topologically, residues 1 to 7 (YLVNPAG) are extracellular. A helical membrane pass occupies residues 8–32 (YAALGAYMFLLILIGFPVNFLTLYV). Residues 33–44 (TLEHKKLRTPLN) lie on the Cytoplasmic side of the membrane. A helical transmembrane segment spans residues 45–67 (YILLNLAVADLFMVLGGFTTTMY). Residues 68 to 81 (TSMHGYFVLGRLGC) lie on the Extracellular side of the membrane. The cysteines at positions 81 and 158 are disulfide-linked. Residues 82–104 (NLEGFFATLGGEIALWSLVVLAI) form a helical membrane-spanning segment. A 'Ionic lock' involved in activated form stabilization motif is present at residues 105-107 (ERW). The Cytoplasmic segment spans residues 105-123 (ERWIVGLKPIRNFRFTEDH). A helical membrane pass occupies residues 124 to 144 (AIMGLAFSWVMALSCAVPPLA). The Extracellular portion of the chain corresponds to 145-173 (GWLRYIPEGIQGSCGVDYYTRAEGFNNES). Asn-171 carries an N-linked (GlcNAc...) asparagine glycan. The helical transmembrane segment at 174 to 195 (FVIYMFTVHFLIPLSVIFFCYG) threads the bilayer. The Cytoplasmic segment spans residues 196 to 223 (RLLCAVKEAAAAQQESETTQRAEKEVSR). Residues 224–245 (MVVIMVIGFLVCWLPYASVAWW) traverse the membrane as a helical segment. Residues 246–257 (IFCNQGSDFGPI) lie on the Extracellular side of the membrane. A helical transmembrane segment spans residues 258–279 (FMTLPSFFAKRPAIYNPMIYIC). Lys-267 bears the N6-(retinylidene)lysine mark. The Cytoplasmic segment spans residues 280 to 289 (MNKQFRHCMI).

Belongs to the G-protein coupled receptor 1 family. Opsin subfamily. In terms of processing, phosphorylated on some or all of the serine and threonine residues present in the C-terminal region. Contains one covalently linked retinal chromophore.

The protein resides in the membrane. The protein localises to the cell projection. It is found in the cilium. Its subcellular location is the photoreceptor outer segment. Functionally, photoreceptor required for image-forming vision at low light intensity. While most salt water fish species use retinal as chromophore, most freshwater fish use 3-dehydroretinal, or a mixture of retinal and 3-dehydroretinal. Light-induced isomerization of 11-cis to all-trans retinal triggers a conformational change that activates signaling via G-proteins. Subsequent receptor phosphorylation mediates displacement of the bound G-protein alpha subunit by arrestin and terminates signaling. This Limnocottus pallidus (Ray-finned fish) protein is Rhodopsin (rho).